A 402-amino-acid chain; its full sequence is Phosphoglycerate kinase (402 aa).

Residues 24 to 26, R40, 63 to 66, R122, and R155 each bind substrate; these read DFN and HFGR. ATP-binding positions include K206, G297, E328, and 358–361; that span reads GGDS.

The protein belongs to the phosphoglycerate kinase family. As to quaternary structure, monomer.

It is found in the cytoplasm. It carries out the reaction (2R)-3-phosphoglycerate + ATP = (2R)-3-phospho-glyceroyl phosphate + ADP. The protein operates within carbohydrate degradation; glycolysis; pyruvate from D-glyceraldehyde 3-phosphate: step 2/5. The polypeptide is Phosphoglycerate kinase (Prochlorococcus marinus (strain MIT 9515)).